Consider the following 117-residue polypeptide: uncharacterized protein (117 aa).

The signal sequence occupies residues 1-24 (MMTEFGSAMTLVTGLVAYGAYVKS). Positions 42-117 (EKENFNYNNN…NNQIKRRLFD (76 aa)) are disordered. Positions 46 to 95 (FNYNNNNNNNNNNNNNNSNNNDNNNNNNSNSNNNNNNNNNNNNNNNNNIN) are enriched in low complexity. 2 N-linked (GlcNAc...) asparagine glycosylation sites follow: asparagine 61 and asparagine 72. Residues 96–110 (DKQINGTNIFDSNNQ) show a composition bias toward polar residues.

The protein resides in the secreted. This is an uncharacterized protein from Dictyostelium discoideum (Social amoeba).